Reading from the N-terminus, the 181-residue chain is ATP synthase subunit b 2 (181 aa).

Positions 1–12 (MAEGHGTTAHTG) are enriched in low complexity. The tract at residues 1 to 20 (MAEGHGTTAHTGAEGGHKAP) is disordered. Residues 33–53 (LVSLLIAFVALYLIVSKVALP) form a helical membrane-spanning segment.

It belongs to the ATPase B chain family. In terms of assembly, F-type ATPases have 2 components, F(1) - the catalytic core - and F(0) - the membrane proton channel. F(1) has five subunits: alpha(3), beta(3), gamma(1), delta(1), epsilon(1). F(0) has three main subunits: a(1), b(2) and c(10-14). The alpha and beta chains form an alternating ring which encloses part of the gamma chain. F(1) is attached to F(0) by a central stalk formed by the gamma and epsilon chains, while a peripheral stalk is formed by the delta and b chains.

The protein resides in the cell inner membrane. Its function is as follows. F(1)F(0) ATP synthase produces ATP from ADP in the presence of a proton or sodium gradient. F-type ATPases consist of two structural domains, F(1) containing the extramembraneous catalytic core and F(0) containing the membrane proton channel, linked together by a central stalk and a peripheral stalk. During catalysis, ATP synthesis in the catalytic domain of F(1) is coupled via a rotary mechanism of the central stalk subunits to proton translocation. Functionally, component of the F(0) channel, it forms part of the peripheral stalk, linking F(1) to F(0). The b'-subunit is a diverged and duplicated form of b found in plants and photosynthetic bacteria. This chain is ATP synthase subunit b 2 (atpF2), found in Rhodopseudomonas palustris (strain BisA53).